A 328-amino-acid chain; its full sequence is PLASTID TRANSCRIPTIONALLY ACTIVE protein 6, chloroplastic (328 aa).

Residues 1–14 are compositionally biased toward low complexity; it reads MASSAASPSLSLLS. The interval 1 to 21 is disordered; sequence MASSAASPSLSLLSFTSKPPY. Residues 1-59 constitute a chloroplast transit peptide; that stretch reads MASSAASPSLSLLSFTSKPPYPSGSQRLFASFRTDGLFAPLTLKSRRGRGIVVKVDDVD. A Nuclear localization signal motif is present at residues 267 to 275; the sequence is RKRDRKDDL. Positions 301-319 match the RNA binding domain motif; sequence EREEWTKTREDMEKHLRKL.

Subunit of the plastid-encoded RNA polymerase (PEP) complex. Component of a large nuclear subcomplex that may include other PEP subunits (e.g. PTAC12/HMR/PAP5, PTAC14/PAP7 and PTAC7/PAP12). Binds directly to PTAC12/HMR/PAP5 in the nucleus. Interacts with MTERF5. Mostly expressed in rosette leaves, stems and flowers, and, to a lower extent, in roots and cauline leaves.

The protein localises to the plastid. The protein resides in the chloroplast. Its subcellular location is the chloroplast thylakoid. It is found in the nucleus. It localises to the nucleoplasm. Essential protein involved in plastid gene expression and in chloroplast biogenesis. Links photomorphogenesis and chloroplast biogenesis through its dual localization; required for the formation of late photobodies in the nucleus, as well as for phytochrome B-mediated signaling cascade and subsequent reshaping of the plastid-encoded RNA polymerase (PEP) activity. Binds RNA via specific recognition motifs of viral origin. Recruited by MTERF5 to the transcriptionally paused region of psbEFLJ. Promotes leaf greening. The protein is PLASTID TRANSCRIPTIONALLY ACTIVE protein 6, chloroplastic of Arabidopsis thaliana (Mouse-ear cress).